A 177-amino-acid polypeptide reads, in one-letter code: Meiotic chromosome segregation protein C17A2.07c (177 aa).

The segment at 71–90 is disordered; it reads EDDSINKPTEEADEAPRTQL. Residues 74–86 show a composition bias toward basic and acidic residues; it reads SINKPTEEADEAP.

Its subcellular location is the nucleus. In terms of biological role, involved in meiotic chromosome segregation. The sequence is that of Meiotic chromosome segregation protein C17A2.07c from Schizosaccharomyces pombe (strain 972 / ATCC 24843) (Fission yeast).